A 537-amino-acid polypeptide reads, in one-letter code: Light-independent protochlorophyllide reductase subunit B (537 aa).

A [4Fe-4S] cluster-binding site is contributed by Asp36. The active-site Proton donor is Asp292. Substrate is bound at residue 428–429; that stretch reads GL. A disordered region spans residues 459-483; it reads TAGETAGQATEAATAPATPGAPLTG.

This sequence belongs to the ChlB/BchB/BchZ family. In terms of assembly, protochlorophyllide reductase is composed of three subunits; BchL, BchN and BchB. Forms a heterotetramer of two BchB and two BchN subunits. Requires [4Fe-4S] cluster as cofactor.

It catalyses the reaction chlorophyllide a + oxidized 2[4Fe-4S]-[ferredoxin] + 2 ADP + 2 phosphate = protochlorophyllide a + reduced 2[4Fe-4S]-[ferredoxin] + 2 ATP + 2 H2O. The protein operates within porphyrin-containing compound metabolism; bacteriochlorophyll biosynthesis (light-independent). In terms of biological role, component of the dark-operative protochlorophyllide reductase (DPOR) that uses Mg-ATP and reduced ferredoxin to reduce ring D of protochlorophyllide (Pchlide) to form chlorophyllide a (Chlide). This reaction is light-independent. The NB-protein (BchN-BchB) is the catalytic component of the complex. This chain is Light-independent protochlorophyllide reductase subunit B, found in Chloroherpeton thalassium (strain ATCC 35110 / GB-78).